The following is a 431-amino-acid chain: MYRFAPSPTGDMHIGNLRAAIFNYICARQKNMDFILRIEDTDKARNIAGKEEEIKEILNLFGISWQHYYIQSENLKFHRQMALKLISEKKAFACFCTEEELEAKKELAKKQGKAYRYDGTCEKLADIDVLECEKPFVIRLKKPTHTMKFTDFIKGELSFEPENIDSFVIMRTDKTPTYNFACAVDDMLENVTCIIRGEDHVSNTPKQEHIRASLGYNKAMTYAHLPIILNEEGVKMSKREAHSSVKWLLESGILPSAIANYLIMLGNKTPCEIFTLEEAIKWFDISKVSKAPARFDLKKLLQINREHIKMIKDDELNKILDLNKDLAQLAKFYTQEASTIKELKEKMRAIFNTKDFGEFETECKILKELLKDIELFENYEDFKNELLSKSDLKGKKFFMPLRIILTGNIHGPELGDLYPYIKNFIHELARI.

Positions 6-16 (PSPTGDMHIGN) match the 'HIGH' region motif. A 'KMSKS' region motif is present at residues 235–239 (KMSKR). Lys238 contacts ATP.

This sequence belongs to the class-I aminoacyl-tRNA synthetase family. Glutamate--tRNA ligase type 1 subfamily. As to quaternary structure, monomer.

The protein localises to the cytoplasm. The catalysed reaction is tRNA(Glu) + L-glutamate + ATP = L-glutamyl-tRNA(Glu) + AMP + diphosphate. Its function is as follows. Catalyzes the attachment of glutamate to tRNA(Glu) in a two-step reaction: glutamate is first activated by ATP to form Glu-AMP and then transferred to the acceptor end of tRNA(Glu). The protein is Glutamate--tRNA ligase 1 of Campylobacter jejuni subsp. jejuni serotype O:6 (strain 81116 / NCTC 11828).